Here is a 229-residue protein sequence, read N- to C-terminus: Large ribosomal subunit protein uL1 (229 aa).

The protein belongs to the universal ribosomal protein uL1 family. As to quaternary structure, part of the 50S ribosomal subunit.

Its function is as follows. Binds directly to 23S rRNA. The L1 stalk is quite mobile in the ribosome, and is involved in E site tRNA release. Functionally, protein L1 is also a translational repressor protein, it controls the translation of the L11 operon by binding to its mRNA. This Streptococcus agalactiae serotype Ia (strain ATCC 27591 / A909 / CDC SS700) protein is Large ribosomal subunit protein uL1.